The sequence spans 597 residues: FERM domain-containing protein 3 (597 aa).

Residues 32–312 enclose the FERM domain; the sequence is MRCTIRLLDD…ENQAFYKYAK (281 aa). The segment at 383 to 403 is disordered; the sequence is LLPSPSEQEEELPLGEGVPLP. Residues 531-551 traverse the membrane as a helical segment; the sequence is LLVVGLGLLLFVFPLLLLLLE.

Ovary-specific.

It localises to the membrane. In terms of biological role, putative tumor suppressor gene that may be implicated in the origin and progression of lung cancer. The chain is FERM domain-containing protein 3 (FRMD3) from Homo sapiens (Human).